The chain runs to 349 residues: tRNA pseudouridine synthase D (349 aa).

Position 26 (phenylalanine 26) interacts with substrate. Residue aspartate 79 is the Nucleophile of the active site. A substrate-binding site is contributed by asparagine 128. The 149-residue stretch at 154–302 (GVPNYFGSQR…VEGSRRAVLL (149 aa)) folds into the TRUD domain. Phenylalanine 328 provides a ligand contact to substrate.

It belongs to the pseudouridine synthase TruD family.

The catalysed reaction is uridine(13) in tRNA = pseudouridine(13) in tRNA. Responsible for synthesis of pseudouridine from uracil-13 in transfer RNAs. This Yersinia pestis bv. Antiqua (strain Antiqua) protein is tRNA pseudouridine synthase D.